The primary structure comprises 93 residues: uncharacterized protein (93 aa).

Residues 25-68 adopt a coiled-coil conformation; the sequence is DIKKLSQVKSELEQGKALLEEEKKELIEKNSNLNLQISNMNHLK.

This is an uncharacterized protein from Dictyostelium discoideum (Social amoeba).